The chain runs to 505 residues: Lysine--tRNA ligase (505 aa).

Residues glutamate 415 and glutamate 422 each contribute to the Mg(2+) site.

It belongs to the class-II aminoacyl-tRNA synthetase family. In terms of assembly, homodimer. Mg(2+) serves as cofactor.

The protein localises to the cytoplasm. The catalysed reaction is tRNA(Lys) + L-lysine + ATP = L-lysyl-tRNA(Lys) + AMP + diphosphate. The chain is Lysine--tRNA ligase from Xanthomonas axonopodis pv. citri (strain 306).